Here is a 191-residue protein sequence, read N- to C-terminus: dCTP deaminase (191 aa).

Residues 112-117 (KSTYAR), 136-138 (TLE), Gln157, Tyr173, and Gln183 each bind dCTP. The active-site Proton donor/acceptor is the Glu138.

This sequence belongs to the dCTP deaminase family. As to quaternary structure, homotrimer.

The catalysed reaction is dCTP + H2O + H(+) = dUTP + NH4(+). It participates in pyrimidine metabolism; dUMP biosynthesis; dUMP from dCTP (dUTP route): step 1/2. In terms of biological role, catalyzes the deamination of dCTP to dUTP. This is dCTP deaminase from Xylella fastidiosa (strain M12).